The chain runs to 776 residues: Protein translocase subunit SecA 2 (776 aa).

ATP-binding positions include Gln-80, 98-102, and Asp-486; that span reads GEGKT.

This sequence belongs to the SecA family. As to quaternary structure, monomer and homodimer. Part of the essential Sec protein translocation apparatus which comprises SecA, SecYEG and auxiliary proteins SecDF. Other proteins may also be involved.

The protein resides in the cell membrane. It localises to the cytoplasm. The enzyme catalyses ATP + H2O + cellular proteinSide 1 = ADP + phosphate + cellular proteinSide 2.. Its function is as follows. Part of the Sec protein translocase complex. Interacts with the SecYEG preprotein conducting channel. Has a central role in coupling the hydrolysis of ATP to the transfer of proteins into and across the cell membrane, serving as an ATP-driven molecular motor driving the stepwise translocation of polypeptide chains across the membrane. This is Protein translocase subunit SecA 2 from Listeria innocua serovar 6a (strain ATCC BAA-680 / CLIP 11262).